Reading from the N-terminus, the 508-residue chain is Small ribosomal subunit protein uS3m (508 aa).

This sequence belongs to the universal ribosomal protein uS3 family. Component of the mitochondrial small ribosomal subunit (mt-SSU). Mature N.crassa 74S mitochondrial ribosomes consist of a small (37S) and a large (54S) subunit. The 37S small subunit contains a 16S ribosomal RNA (16S mt-rRNA) and 32 different proteins. The 54S large subunit contains a 23S rRNA (23S mt-rRNA) and 42 different proteins. uS3m, uS4m and uS5m form the narrow entry site of the mRNA channel.

It localises to the mitochondrion. Its function is as follows. Component of the mitochondrial ribosome (mitoribosome), a dedicated translation machinery responsible for the synthesis of mitochondrial genome-encoded proteins, including at least some of the essential transmembrane subunits of the mitochondrial respiratory chain. The mitoribosomes are attached to the mitochondrial inner membrane and translation products are cotranslationally integrated into the membrane. uS3m is essential for mitochondrial protein synthesis and required for the maturation of small ribosomal subunits. The sequence is that of Small ribosomal subunit protein uS3m (var1) from Neurospora crassa (strain ATCC 24698 / 74-OR23-1A / CBS 708.71 / DSM 1257 / FGSC 987).